An 85-amino-acid polypeptide reads, in one-letter code: Cell division topological specificity factor (85 aa).

This sequence belongs to the MinE family.

Its function is as follows. Prevents the cell division inhibition by proteins MinC and MinD at internal division sites while permitting inhibition at polar sites. This ensures cell division at the proper site by restricting the formation of a division septum at the midpoint of the long axis of the cell. The sequence is that of Cell division topological specificity factor from Xylella fastidiosa (strain M12).